The following is a 312-amino-acid chain: Pantothenate kinase (312 aa).

97-104 (GSVAVGKS) serves as a coordination point for ATP.

Belongs to the prokaryotic pantothenate kinase family.

It is found in the cytoplasm. The enzyme catalyses (R)-pantothenate + ATP = (R)-4'-phosphopantothenate + ADP + H(+). The protein operates within cofactor biosynthesis; coenzyme A biosynthesis; CoA from (R)-pantothenate: step 1/5. This is Pantothenate kinase from Corynebacterium glutamicum (strain ATCC 13032 / DSM 20300 / JCM 1318 / BCRC 11384 / CCUG 27702 / LMG 3730 / NBRC 12168 / NCIMB 10025 / NRRL B-2784 / 534).